Here is a 135-residue protein sequence, read N- to C-terminus: MTYTTAKAAEKIGISAYTLRFYDKEGLLPNVGRDEYGNRRFTDKDLQWLSLLQCLKNTGMSLKDIKRFAECTIIGDDTIEERLSLFENQTKNVKCQIAELKRYLDLLEYKLAFYQKAKALGSVKAVNLPQIPETS.

Positions 2–71 constitute an HTH merR-type domain; the sequence is TYTTAKAAEK…LKDIKRFAEC (70 aa). A DNA-binding region (H-T-H motif) is located at residues 5–24; that stretch reads TAKAAEKIGISAYTLRFYDK.

This is an uncharacterized protein from Haemophilus influenzae (strain ATCC 51907 / DSM 11121 / KW20 / Rd).